The following is a 117-amino-acid chain: Immunoglobulin kappa variable 1D-17 (117 aa).

A signal peptide spans 1 to 22; that stretch reads MDMRVPAQLLGLLLLWFPGARC. The segment at 23–45 is framework-1; the sequence is NIQMTQSPSAMSASVGDRVTITC. The 95-residue stretch at 23-117 folds into the Ig-like domain; that stretch reads NIQMTQSPSA…YYCLQHNSYP (95 aa). An intrachain disulfide couples C45 to C110. Residues 46 to 56 are complementarity-determining-1; it reads RARQGISNYLA. A framework-2 region spans residues 57-71; the sequence is WFQQKPGKVPKHLIY. Residues 72–78 form a complementarity-determining-2 region; it reads AASSLQS. Residues 79-110 are framework-3; that stretch reads GVPSRFSGSGSGTEFTLTISSLQPEDFATYYC. The complementarity-determining-3 stretch occupies residues 111 to 117; sequence LQHNSYP.

As to quaternary structure, immunoglobulins are composed of two identical heavy chains and two identical light chains; disulfide-linked.

It localises to the secreted. Its subcellular location is the cell membrane. Functionally, v region of the variable domain of immunoglobulin light chains that participates in the antigen recognition. Immunoglobulins, also known as antibodies, are membrane-bound or secreted glycoproteins produced by B lymphocytes. In the recognition phase of humoral immunity, the membrane-bound immunoglobulins serve as receptors which, upon binding of a specific antigen, trigger the clonal expansion and differentiation of B lymphocytes into immunoglobulins-secreting plasma cells. Secreted immunoglobulins mediate the effector phase of humoral immunity, which results in the elimination of bound antigens. The antigen binding site is formed by the variable domain of one heavy chain, together with that of its associated light chain. Thus, each immunoglobulin has two antigen binding sites with remarkable affinity for a particular antigen. The variable domains are assembled by a process called V-(D)-J rearrangement and can then be subjected to somatic hypermutations which, after exposure to antigen and selection, allow affinity maturation for a particular antigen. The chain is Immunoglobulin kappa variable 1D-17 from Homo sapiens (Human).